The primary structure comprises 466 residues: 3-isopropylmalate dehydratase large subunit (466 aa).

The [4Fe-4S] cluster site is built by Cys347, Cys407, and Cys410.

Belongs to the aconitase/IPM isomerase family. LeuC type 1 subfamily. In terms of assembly, heterodimer of LeuC and LeuD. [4Fe-4S] cluster is required as a cofactor.

It catalyses the reaction (2R,3S)-3-isopropylmalate = (2S)-2-isopropylmalate. Its pathway is amino-acid biosynthesis; L-leucine biosynthesis; L-leucine from 3-methyl-2-oxobutanoate: step 2/4. Catalyzes the isomerization between 2-isopropylmalate and 3-isopropylmalate, via the formation of 2-isopropylmaleate. The protein is 3-isopropylmalate dehydratase large subunit of Shigella flexneri serotype 5b (strain 8401).